Here is a 77-residue protein sequence, read N- to C-terminus: Acyl carrier protein (77 aa).

The region spanning 2 to 77 (ADTLERVTKI…DAVNYIQNQQ (76 aa)) is the Carrier domain. Position 37 is an O-(pantetheine 4'-phosphoryl)serine (S37).

Belongs to the acyl carrier protein (ACP) family. Post-translationally, 4'-phosphopantetheine is transferred from CoA to a specific serine of apo-ACP by AcpS. This modification is essential for activity because fatty acids are bound in thioester linkage to the sulfhydryl of the prosthetic group.

It is found in the cytoplasm. Its pathway is lipid metabolism; fatty acid biosynthesis. In terms of biological role, carrier of the growing fatty acid chain in fatty acid biosynthesis. The polypeptide is Acyl carrier protein (acpA) (Bacillus subtilis (strain 168)).